The chain runs to 179 residues: Proteasome chaperone 3 (179 aa).

This sequence belongs to the PSMG3 family. Component of the 20S proteasome chaperone. Forms a heterodimer with POC4 that binds to proteasome precursors. Interacts with POP2.

Its function is as follows. Involved in 20S proteasome assembly, facilitating the alpha-ring formation. The polypeptide is Proteasome chaperone 3 (IRC25) (Saccharomyces cerevisiae (strain ATCC 204508 / S288c) (Baker's yeast)).